We begin with the raw amino-acid sequence, 186 residues long: Single-stranded DNA-binding protein 1 (186 aa).

In terms of domain architecture, SSB spans 1 to 108; sequence MDATVTVVGN…LEIDEIGPTL (108 aa). Residues 120–186 are disordered; that stretch reads QAGHGVSPDP…EDFDSDEVPF (67 aa). Polar residues predominate over residues 132-141; sequence DSQTGQGIDS. Positions 175 to 186 are enriched in acidic residues; it reads SYEDFDSDEVPF.

As to quaternary structure, homotetramer.

In Tropheryma whipplei (strain TW08/27) (Whipple's bacillus), this protein is Single-stranded DNA-binding protein 1 (ssb1).